A 166-amino-acid chain; its full sequence is Small ribosomal subunit protein uS5 (166 aa).

The S5 DRBM domain maps to 11–74; it reads LQEKLVQVNR…DQARRNMVKV (64 aa).

The protein belongs to the universal ribosomal protein uS5 family. Part of the 30S ribosomal subunit. Contacts proteins S4 and S8.

In terms of biological role, with S4 and S12 plays an important role in translational accuracy. Its function is as follows. Located at the back of the 30S subunit body where it stabilizes the conformation of the head with respect to the body. This Chromohalobacter salexigens (strain ATCC BAA-138 / DSM 3043 / CIP 106854 / NCIMB 13768 / 1H11) protein is Small ribosomal subunit protein uS5.